Here is a 184-residue protein sequence, read N- to C-terminus: Protein Syd (184 aa).

The protein belongs to the Syd family.

The protein resides in the cell inner membrane. In terms of biological role, interacts with the SecY protein in vivo. May bind preferentially to an uncomplexed state of SecY, thus functioning either as a chelating agent for excess SecY in the cell or as a regulatory factor that negatively controls the translocase function. In Photobacterium profundum (strain SS9), this protein is Protein Syd.